A 203-amino-acid chain; its full sequence is Protein-methionine-sulfoxide reductase heme-binding subunit MsrQ (203 aa).

Helical transmembrane passes span 13–33 (IAIW…INLG), 79–99 (LLGL…SILE), 116–136 (PYLT…LTST), 147–167 (WQKL…HYLW), and 169–189 (VKTL…LLLL).

It belongs to the MsrQ family. Heterodimer of a catalytic subunit (MsrP) and a heme-binding subunit (MsrQ). It depends on FMN as a cofactor. Heme b is required as a cofactor.

The protein resides in the cell inner membrane. Its function is as follows. Part of the MsrPQ system that repairs oxidized periplasmic proteins containing methionine sulfoxide residues (Met-O), using respiratory chain electrons. Thus protects these proteins from oxidative-stress damage caused by reactive species of oxygen and chlorine generated by the host defense mechanisms. MsrPQ is essential for the maintenance of envelope integrity under bleach stress, rescuing a wide series of structurally unrelated periplasmic proteins from methionine oxidation. MsrQ provides electrons for reduction to the reductase catalytic subunit MsrP, using the quinone pool of the respiratory chain. The polypeptide is Protein-methionine-sulfoxide reductase heme-binding subunit MsrQ (Yersinia pseudotuberculosis serotype O:1b (strain IP 31758)).